We begin with the raw amino-acid sequence, 180 residues long: Vacuolar ATPase assembly protein VMA22 (180 aa).

Positions 16 to 37 (QLLGDLEELEGKRTVLNARVEE) form a coiled coil. Residues 92-101 (EEVGPREAGL) are compositionally biased toward basic and acidic residues. The segment at 92–122 (EEVGPREAGLRRRKGPTKTPEPESSEAPQDP) is disordered. Residues 153 to 176 (SLQNRIDWGRSQLRGLQEKLKQLE) are a coiled coil.

As to quaternary structure, accessory component of the multisubunit proton-transporting vacuolar (V)-ATPase protein pump. Expressed throughout the brain.

The protein resides in the endosome. It is found in the lysosome. Its subcellular location is the endoplasmic reticulum-Golgi intermediate compartment. The protein localises to the cytoplasmic vesicle. It localises to the COPI-coated vesicle. The protein resides in the endoplasmic reticulum. Functionally, accessory component of the proton-transporting vacuolar (V)-ATPase protein pump involved in intracellular iron homeostasis. In aerobic conditions, required for intracellular iron homeostasis, thus triggering the activity of Fe(2+) prolyl hydroxylase (PHD) enzymes, and leading to HIF1A hydroxylation and subsequent proteasomal degradation. Necessary for endolysosomal acidification and lysosomal degradation. May be involved in Golgi homeostasis. The protein is Vacuolar ATPase assembly protein VMA22 of Homo sapiens (Human).